Here is a 213-residue protein sequence, read N- to C-terminus: Dephospho-CoA kinase (213 aa).

In terms of domain architecture, DPCK spans 3–202 (RIGLTGGIGS…QSYLALADKH (200 aa)). An ATP-binding site is contributed by 11 to 16 (GSGKTR).

Belongs to the CoaE family.

It localises to the cytoplasm. The catalysed reaction is 3'-dephospho-CoA + ATP = ADP + CoA + H(+). Its pathway is cofactor biosynthesis; coenzyme A biosynthesis; CoA from (R)-pantothenate: step 5/5. Catalyzes the phosphorylation of the 3'-hydroxyl group of dephosphocoenzyme A to form coenzyme A. The polypeptide is Dephospho-CoA kinase (Bordetella avium (strain 197N)).